Reading from the N-terminus, the 1538-residue chain is MAAPQDLDIAVWLALVHLEQYADTFRRHGLATAGAAQHLGHEELRHLGISATGHRKRILRLLRAGSAEGFLDSHLDNTMEPTPSPAPDAQPPKPVPKPRTVFGLSNPATAQRPGLSPIFWDPEVSRNSECTQRSSPLLPSSSEQPSVPNTMEMMPNAIYFGLDLRGRAQAAQDVTPDSSQATVPTPAFRPTTGTVHIMDPGCLYYGVQPVGIPGASDRRDGRGVCQERAEHRQDLETREDAGYASLELPGDSILSLPTQDAETSDDLISPYASFSSTADRPVPLLSGWLDKLSPQGNYVFQRRFVQFNGRSLMYFGSDKDPFPKGVIPLTAIEMTRSSKDNKFQVITGQRVFVFRTESEAQRDLWCSTLQSCLKEQRLLGHPRPPHPPRPLRTGTLELRGHKAKVFAALIPGELALYKSEQAFSLGIGICFIELQGCSVRETKSRSFDLLTPHRCFSFTAESGGARQSWAAALQEAVTETLSDYEVAEKVWSNPANRHCADCRASRPDWAAVNLGVVICKQCAGQHRALGSGISKVQSLKLDTSVWSNEIVQLFIVLGNDRANCFWAGALPPGEGLHPDSAPGPRGEFISRKYKLGLFRKPHPRHPDHSQLLQALCAAMAGPNLLKNMAQLLCVETSEGEEPLSPSALNGSLLSLLPSDSPGVYNEVVVPATYRGFLYCGSISNKAGAPPLRRGRDAPPRLWCVLGAALEMFASESSPEPLSLLQPQDIVCLGVSPPPADPGDLDRFPFSFELILTGGRIQHFATDGADSLEAWISAVGKWFSPLSCHQLLGPGLLRMGRLWLRSPSHAGLAPGLWLSGFGLLRGDHLFLCPAPGPGPPAPEDMVHLRRLQEISVVSAADTPDKKEHLVLVETGRTLYLQGEGRLDFAAWNTAIGGAAGGGGTGLQEQQMSRGDIPIIVDACISFVTQHGLRLEGVYRKGGARARSLRLLAEFRRDARSVKLRPREHFVEDVTDTLKRFFRELDDPVTSARLLPRWREAAELSQKNQRLEKYKEVISCLPRVNRRTLATLIGHLYRVQKCASLNQMCTRNLALLFAPSVFQTDGRGEHEVRVLQELIDGYISVFDIDSDQAAQIDLEVSLITTWKDVQLSQAGDLIMEVYIEQQLPDNCVTLKVSPTLTAEELTNQVLEMRGAASGTDLWVTFEILEHGELERPLHPKEKVLEQALQWCQLPEPCSASLLLRKVSMAHAGCLFTGVRRESPRVGLLRCREEPPRLLGNRFQERFFLVRGRCLLLLKEKKSSKPEREWSLEGAKVYLGIRKKLKPPTLWGFTLILEKMHLCLSCMDEEEMWDWTTSILKAQHDDQQSVVLRRRSSSDLARQKFGTMPLLPIRGDDSGATLLSANQTLRRLHNRRTLSMFFPMKSPQGSVEEQDELEEPVYEEPVYEEVGAFPELTKDTTFSSTWEWSAKSDPSLTSQRSFDQPPLSKASMLGHEERIPDPPPGPPSKSSSQARGSLEEQLLQELNNLILRKGEPASCPESSSQPTSPQAPSPTSLPTPTPSLPTQPPCTSNPPSSQPLT.

The region spanning 4–68 (PQDLDIAVWL…LRLLRAGSAE (65 aa)) is the SAM domain. 3 disordered regions span residues 72-97 (DSHL…PVPK), 125-149 (SRNS…SVPN), and 215-242 (ASDR…EDAG). The span at 82–97 (TPSPAPDAQPPKPVPK) shows a compositional bias: pro residues. Basic and acidic residues predominate over residues 216-241 (SDRRDGRGVCQERAEHRQDLETREDA). PH domains are found at residues 282-374 (VPLL…SCLK) and 389-478 (RPLR…EAVT). The Arf-GAP domain occupies 479-606 (ETLSDYEVAE…LFRKPHPRHP (128 aa)). 2 consecutive PH domains span residues 671 to 785 (ATYR…FSPL) and 795 to 901 (LLRM…AGGG). A Rho-GAP domain is found at 903-1084 (TGLQEQQMSR…ELIDGYISVF (182 aa)). The Ras-associating domain occupies 1113–1206 (GDLIMEVYIE…ASLLLRKVSM (94 aa)). In terms of domain architecture, PH 5 spans 1219–1321 (ESPRVGLLRC…WTTSILKAQH (103 aa)). Threonine 1344 carries the post-translational modification Phosphothreonine. Phosphotyrosine is present on residues tyrosine 1399 and tyrosine 1404. Over residues 1425–1439 (WSAKSDPSLTSQRSF) the composition is skewed to polar residues. The segment at 1425–1538 (WSAKSDPSLT…SNPPSSQPLT (114 aa)) is disordered. Phosphoserine occurs at positions 1438 and 1474. Composition is skewed to low complexity over residues 1476 to 1486 (EEQLLQELNNL) and 1494 to 1505 (ASCPESSSQPTS). The segment covering 1506-1529 (PQAPSPTSLPTPTPSLPTQPPCTS) has biased composition (pro residues).

Interacts (via SAM domain) with INPPL1/SHIP2. In terms of processing, tyrosine phosphorylated at a low basal level. PDGF treatment stimulates phosphorylation. Tyrosine phosphorylation is increased in cells that are in the process of becoming attached to a substrate and that start spreading and flattening.

It localises to the cytoplasm. It is found in the cell membrane. The protein resides in the cytoskeleton. Its subcellular location is the cell projection. The protein localises to the lamellipodium. It localises to the ruffle. Phosphatidylinositol 3,4,5-trisphosphate-dependent GTPase-activating protein that modulates actin cytoskeleton remodeling by regulating ARF and RHO family members. Is activated by phosphatidylinositol 3,4,5-trisphosphate (PtdIns(3,4,5)P3) binding. Can be activated by phosphatidylinositol 3,4-bisphosphate (PtdIns(3,4,5)P2) binding, albeit with lower efficiency. Acts preferentially on ARF5 and on RHOA. In Mus musculus (Mouse), this protein is Arf-GAP with Rho-GAP domain, ANK repeat and PH domain-containing protein 3 (Arap3).